Consider the following 85-residue polypeptide: Homeobox protein knotted-1-like 7 (85 aa).

The region spanning 1–21 (ELKNELKQGYKEKLVDIREEI) is the ELK domain. Residues 22–85 (MRKRRAGKLP…NQRKRNWHSN (64 aa)) constitute a DNA-binding region (homeobox; TALE-type).

It belongs to the TALE/KNOX homeobox family. In terms of tissue distribution, expressed in all tissues examined. Highest expression in leaves.

The protein localises to the nucleus. This Zea mays (Maize) protein is Homeobox protein knotted-1-like 7 (KNOX7).